Reading from the N-terminus, the 121-residue chain is Large ribosomal subunit protein uL14 (121 aa).

The protein belongs to the universal ribosomal protein uL14 family. As to quaternary structure, part of the 50S ribosomal subunit. Forms a cluster with proteins L3 and L19. In the 70S ribosome, L14 and L19 interact and together make contacts with the 16S rRNA in bridges B5 and B8.

Binds to 23S rRNA. Forms part of two intersubunit bridges in the 70S ribosome. In Legionella pneumophila (strain Paris), this protein is Large ribosomal subunit protein uL14.